The primary structure comprises 344 residues: Ferredoxin--NADP reductase (344 aa).

8 residues coordinate FAD: Ser-12, Asp-31, Lys-39, Tyr-43, Val-83, Ile-118, Asp-285, and Ser-326.

Belongs to the ferredoxin--NADP reductase type 2 family. Homodimer. The cofactor is FAD.

It catalyses the reaction 2 reduced [2Fe-2S]-[ferredoxin] + NADP(+) + H(+) = 2 oxidized [2Fe-2S]-[ferredoxin] + NADPH. The polypeptide is Ferredoxin--NADP reductase (Staphylococcus aureus (strain MW2)).